The following is a 296-amino-acid chain: tRNA pseudouridine synthase B (296 aa).

The Nucleophile role is filled by D38.

The protein belongs to the pseudouridine synthase TruB family. Type 1 subfamily.

The enzyme catalyses uridine(55) in tRNA = pseudouridine(55) in tRNA. Responsible for synthesis of pseudouridine from uracil-55 in the psi GC loop of transfer RNAs. This is tRNA pseudouridine synthase B from Ehrlichia ruminantium (strain Gardel).